A 161-amino-acid polypeptide reads, in one-letter code: Eukaryotic translation initiation factor 5A-2 (161 aa).

Lys54 is subject to Hypusine.

Belongs to the eIF-5A family. Post-translationally, lys-54 undergoes hypusination, a unique post-translational modification that consists in the addition of a butylamino group from spermidine to lysine side chain and leads to the formation of a hypusine residue. eIF-5As are the only known proteins to undergo this modification, which is essential for their function. Expressed in the somatic tissues.

The protein resides in the cytoplasm. Its function is as follows. Translation factor that promotes translation elongation and termination, particularly upon ribosome stalling at specific amino acid sequence contexts. Binds between the exit (E) and peptidyl (P) site of the ribosome and promotes rescue of stalled ribosome: specifically required for efficient translation of polyproline-containing peptides as well as other motifs that stall the ribosome. Acts as a ribosome quality control (RQC) cofactor by joining the RQC complex to facilitate peptidyl transfer during CAT tailing step. Acts in somatic tissues and its function in the soma is essential for normal growth and reproduction. The polypeptide is Eukaryotic translation initiation factor 5A-2 (iff-2) (Caenorhabditis elegans).